The sequence spans 95 residues: Co-chaperonin GroES (95 aa).

Belongs to the GroES chaperonin family. In terms of assembly, heptamer of 7 subunits arranged in a ring. Interacts with the chaperonin GroEL.

Its subcellular location is the cytoplasm. In terms of biological role, together with the chaperonin GroEL, plays an essential role in assisting protein folding. The GroEL-GroES system forms a nano-cage that allows encapsulation of the non-native substrate proteins and provides a physical environment optimized to promote and accelerate protein folding. GroES binds to the apical surface of the GroEL ring, thereby capping the opening of the GroEL channel. In Rickettsia bellii (strain RML369-C), this protein is Co-chaperonin GroES.